A 266-amino-acid polypeptide reads, in one-letter code: MIKLNNVTFRYRPSDENPAINNVSLEIKKGQYVAILGHNGSGKSTLSKILVALLKPQKGELFIDGIQYSKENLKEIRKKIGIIFQNPDNQFIGSTVEDDIAFGLENKNISRDEMRTKVVEYAKVVDMEKHLSREPEYLSGGQKQRVAIASVLALDPEVIIFDEVTSMLDPKGKSKVIQIIKQIQADKDKTLISITHDMDEAILADTVLVFAKGKLVAAGSPKDILNEEKIIEIAKIASPFIYKISKHINGIEPTYVEEELISQICK.

One can recognise an ABC transporter domain in the interval 2 to 237; it reads IKLNNVTFRY…EKIIEIAKIA (236 aa). Residue 37 to 44 coordinates ATP; it reads GHNGSGKS.

It belongs to the ABC transporter superfamily. Energy-coupling factor EcfA family. As to quaternary structure, forms a stable energy-coupling factor (ECF) transporter complex composed of 2 membrane-embedded substrate-binding proteins (S component), 2 ATP-binding proteins (A component) and 2 transmembrane proteins (T component).

The protein localises to the cell membrane. Its function is as follows. ATP-binding (A) component of a common energy-coupling factor (ECF) ABC-transporter complex. Unlike classic ABC transporters this ECF transporter provides the energy necessary to transport a number of different substrates. The protein is Energy-coupling factor transporter ATP-binding protein EcfA1 of Mycoplasmopsis synoviae (strain 53) (Mycoplasma synoviae).